We begin with the raw amino-acid sequence, 383 residues long: ATP phosphoribosyltransferase regulatory subunit (383 aa).

The protein belongs to the class-II aminoacyl-tRNA synthetase family. HisZ subfamily. Heteromultimer composed of HisG and HisZ subunits.

It localises to the cytoplasm. Its pathway is amino-acid biosynthesis; L-histidine biosynthesis; L-histidine from 5-phospho-alpha-D-ribose 1-diphosphate: step 1/9. Required for the first step of histidine biosynthesis. May allow the feedback regulation of ATP phosphoribosyltransferase activity by histidine. The polypeptide is ATP phosphoribosyltransferase regulatory subunit (Chromobacterium violaceum (strain ATCC 12472 / DSM 30191 / JCM 1249 / CCUG 213 / NBRC 12614 / NCIMB 9131 / NCTC 9757 / MK)).